The sequence spans 1480 residues: Heme-responsive zinc finger transcription factor HAP1 (1480 aa).

Residues 1-50 (MSNTPYNSSVPSIASMTQSSVSRSPNMHTATTPGANTSSNSPPLHMSSDS) are compositionally biased toward polar residues. The interval 1–56 (MSNTPYNSSVPSIASMTQSSVSRSPNMHTATTPGANTSSNSPPLHMSSDSSKIKRK) is disordered. 6 residues coordinate Zn(2+): Cys-64, Cys-67, Cys-74, Cys-81, Cys-84, and Cys-93. A DNA-binding region (zn(2)-C6 fungal-type) is located at residues 64-93 (CTICRKRKVKCDKLRPHCQQCTKTGVAHLC). Positions 105 to 134 (EKELLKDNELKKLRERVKSLEKTLSKVHSS) form a coiled coil. The disordered stretch occupies residues 126–208 (KTLSKVHSSP…ANSSSLSISN (83 aa)). Low complexity predominate over residues 130 to 142 (KVHSSPSSNSLKS). Polar residues-rich tracts occupy residues 143-152 (YNTPESSNLF) and 160-176 (TLVN…SHMH). Positions 177 to 208 (QQQQQQQQQEQQQDFSRSANANANSSSLSISN) are enriched in low complexity. Residues 244–441 (KGDPYLKLLW…NTIPHHQPQS (198 aa)) form a heme-responsive; required for HMC formation region. HRM repeat units follow at residues 280 to 285 (KCPINH), 296 to 301 (KCPVDH), 320 to 325 (KCPVDH), 344 to 349 (RCPVDH), 386 to 391 (KCPVDH), and 412 to 417 (RCPIDH). Polar residues-rich tracts occupy residues 429 to 444 (STHN…SGSH) and 703 to 731 (QLNA…NPTL). Disordered stretches follow at residues 429 to 456 (STHN…RKHD) and 703 to 764 (QLNA…KENQ). A compositionally biased stretch (low complexity) spans 732–756 (NNNMSAATTNSSSRSGSADSRSGSN). An HRM 7 repeat occupies 1189-1194 (KCPVYQ). The tract at residues 1381–1408 (TANTDTSANGSALSTLTSPQGSDLASNS) is disordered. Positions 1385–1408 (DTSANGSALSTLTSPQGSDLASNS) are enriched in polar residues.

As to quaternary structure, binds DNA as a homodimer. Interacts with SRO9 and YDJ1. In the absence of heme, binds to at least four cellular proteins, including YDJ1 and SRO9, forming a high-molecular-weight complex (HMC) which results in repression of its activity and dictates its DNA-binding specificity.

It is found in the nucleus. Regulation of oxygen dependent gene expression. It modulates the expression of Iso-1 (CYP1) and Iso-2 (CYP3) cytochrome c. In response to heme, promotes transcription of genes encoding functions required for respiration, controlling oxidative damage and repression of anaerobic genes. Binds to the sequence 5'-CGGNNNTNNCGG-3'. Is non-functional in terms of iso-1 cytochrome c expression in strain S288c and its derivatives. The protein is Heme-responsive zinc finger transcription factor HAP1 (HAP1) of Saccharomyces cerevisiae (strain Kyokai no. 7 / NBRC 101557) (Baker's yeast).